Here is a 186-residue protein sequence, read N- to C-terminus: PRA1 family protein G2 (186 aa).

4 helical membrane passes run 66-86, 87-107, 119-139, and 142-162; these read YFFVNYTIIVSTCAAFALITA, SPVALIVVGAIIALWLIFHFF, VGDRTVLLFLVLASVWAIWFT, and AVNLAVGVSVGLLLCIIHAVF.

It belongs to the PRA1 family. Expressed in roots and trichomes.

It localises to the endoplasmic reticulum membrane. Functionally, may be involved in both secretory and endocytic intracellular trafficking in the endosomal/prevacuolar compartments. In Arabidopsis thaliana (Mouse-ear cress), this protein is PRA1 family protein G2 (PRA1G2).